A 376-amino-acid chain; its full sequence is UDP-N-acetylglucosamine--N-acetylmuramyl-(pentapeptide) pyrophosphoryl-undecaprenol N-acetylglucosamine transferase (376 aa).

Residues 12 to 14 (TGG), asparagine 125, arginine 165, serine 197, and glutamine 296 contribute to the UDP-N-acetyl-alpha-D-glucosamine site.

It belongs to the glycosyltransferase 28 family. MurG subfamily.

Its subcellular location is the cell inner membrane. The enzyme catalyses di-trans,octa-cis-undecaprenyl diphospho-N-acetyl-alpha-D-muramoyl-L-alanyl-D-glutamyl-meso-2,6-diaminopimeloyl-D-alanyl-D-alanine + UDP-N-acetyl-alpha-D-glucosamine = di-trans,octa-cis-undecaprenyl diphospho-[N-acetyl-alpha-D-glucosaminyl-(1-&gt;4)]-N-acetyl-alpha-D-muramoyl-L-alanyl-D-glutamyl-meso-2,6-diaminopimeloyl-D-alanyl-D-alanine + UDP + H(+). It participates in cell wall biogenesis; peptidoglycan biosynthesis. In terms of biological role, cell wall formation. Catalyzes the transfer of a GlcNAc subunit on undecaprenyl-pyrophosphoryl-MurNAc-pentapeptide (lipid intermediate I) to form undecaprenyl-pyrophosphoryl-MurNAc-(pentapeptide)GlcNAc (lipid intermediate II). The protein is UDP-N-acetylglucosamine--N-acetylmuramyl-(pentapeptide) pyrophosphoryl-undecaprenol N-acetylglucosamine transferase of Protochlamydia amoebophila (strain UWE25).